A 124-amino-acid chain; its full sequence is Fluoride-specific ion channel FluC (124 aa).

The next 4 membrane-spanning stretches (helical) occupy residues 6-26 (FAVACGGVIGTLLRFALATWV), 34-54 (FYLATVAVNLLGCLLIGYLYA), 69-89 (ALIIGFLGALTTFSSFSLDAL), and 101-121 (FAYVGGSVLGGLLAAWAGLAL). Residues glycine 76 and threonine 79 each coordinate Na(+).

This sequence belongs to the fluoride channel Fluc/FEX (TC 1.A.43) family.

Its subcellular location is the cell inner membrane. The enzyme catalyses fluoride(in) = fluoride(out). With respect to regulation, na(+) is not transported, but it plays an essential structural role and its presence is essential for fluoride channel function. Functionally, fluoride-specific ion channel. Important for reducing fluoride concentration in the cell, thus reducing its toxicity. The sequence is that of Fluoride-specific ion channel FluC from Stutzerimonas stutzeri (strain A1501) (Pseudomonas stutzeri).